We begin with the raw amino-acid sequence, 2346 residues long: Acetyl-CoA carboxylase 1 (2346 aa).

Residue Met1 is modified to N-acetylmethionine. Phosphoserine occurs at positions 5, 23, 25, 29, 34, 48, 50, and 53. The residue at position 58 (Thr58) is a Phosphothreonine. Ser78 and Ser80 each carry phosphoserine. In terms of domain architecture, Biotin carboxylation spans 117–618 (VIEKVLIANN…DTGWLDRLIA (502 aa)). Positions 275 to 466 (SKRILNVPQE…LPAAQLQIAM (192 aa)) constitute an ATP-grasp domain. 315 to 320 (GGGGKG) provides a ligand contact to ATP. The Mg(2+) site is built by Glu424, Glu437, and Asn439. 3 residues coordinate Mn(2+): Glu424, Glu437, and Asn439. Residue Arg441 is part of the active site. Phosphoserine is present on Ser488. Residue Thr610 is modified to Phosphothreonine. In terms of domain architecture, Biotinyl-binding spans 745 to 819 (FEKENDPSVM…DPGCVLAKMQ (75 aa)). Lys786 carries the post-translational modification N6-biotinyllysine. Phosphoserine occurs at positions 835, 1201, 1216, and 1218. At Thr1227 the chain carries Phosphothreonine. Ser1259, Ser1263, and Ser1273 each carry phosphoserine. The residue at position 1334 (Lys1334) is an N6-acetyllysine. Residues 1576 to 1914 (PYVTKDLLQS…SVHSSVPLLN (339 aa)) form the CoA carboxyltransferase N-terminal domain. Residues 1576-2234 (PYVTKDLLQS…EDLVKKKIHN (659 aa)) are carboxyltransferase. Arg1823, Lys2127, and Arg2129 together coordinate CoA. The region spanning 1918–2234 (PIDRIIEFVP…EDLVKKKIHN (317 aa)) is the CoA carboxyltransferase C-terminal domain. Thr2153 bears the Phosphothreonine mark.

Monomer, homodimer, and homotetramer. Can form filamentous polymers. Interacts in its inactive phosphorylated form with the BRCT domains of BRCA1 which prevents ACACA dephosphorylation and inhibits lipid synthesis. Interacts with MID1IP1; interaction with MID1IP1 promotes oligomerization and increases its activity. Mg(2+) is required as a cofactor. The cofactor is Mn(2+). Biotin serves as cofactor. Post-translationally, phosphorylation on Ser-1263 is required for interaction with BRCA1. In terms of processing, phosphorylation at Ser-80 by AMPK inactivates enzyme activity. The biotin cofactor is covalently attached to the central biotinyl-binding domain and is required for the catalytic activity. As to expression, expressed in brain, placenta, skeletal muscle, renal, pancreatic and adipose tissues; expressed at low level in pulmonary tissue; not detected in the liver.

It localises to the cytoplasm. The protein localises to the cytosol. The catalysed reaction is hydrogencarbonate + acetyl-CoA + ATP = malonyl-CoA + ADP + phosphate + H(+). Its pathway is lipid metabolism; malonyl-CoA biosynthesis; malonyl-CoA from acetyl-CoA: step 1/1. Inhibited by phosphorylation. Citrate promotes oligomerization of the protein into filaments that correspond to the most active form of the carboxylase. Inhibited by palmitoyl-CoA. Functionally, cytosolic enzyme that catalyzes the carboxylation of acetyl-CoA to malonyl-CoA, the first and rate-limiting step of de novo fatty acid biosynthesis. This is a 2 steps reaction starting with the ATP-dependent carboxylation of the biotin carried by the biotin carboxyl carrier (BCC) domain followed by the transfer of the carboxyl group from carboxylated biotin to acetyl-CoA. The sequence is that of Acetyl-CoA carboxylase 1 from Homo sapiens (Human).